The chain runs to 457 residues: Ribulose bisphosphate carboxylase large chain (457 aa).

A propeptide spanning residues 1–2 (MS) is cleaved from the precursor. The residue at position 3 (P3) is an N-acetylproline. K14 carries the post-translational modification N6,N6,N6-trimethyllysine. Substrate contacts are provided by N123 and T173. K175 acts as the Proton acceptor in catalysis. Substrate is bound at residue K177. Residues K201, D203, and E204 each contribute to the Mg(2+) site. K201 carries the N6-carboxylysine modification. H294 (proton acceptor) is an active-site residue. 3 residues coordinate substrate: R295, H327, and S379.

Belongs to the RuBisCO large chain family. Type I subfamily. Heterohexadecamer of 8 large chains and 8 small chains; disulfide-linked. The disulfide link is formed within the large subunit homodimers. Mg(2+) serves as cofactor. The disulfide bond which can form in the large chain dimeric partners within the hexadecamer appears to be associated with oxidative stress and protein turnover.

It localises to the plastid. The protein resides in the chloroplast. The catalysed reaction is 2 (2R)-3-phosphoglycerate + 2 H(+) = D-ribulose 1,5-bisphosphate + CO2 + H2O. The enzyme catalyses D-ribulose 1,5-bisphosphate + O2 = 2-phosphoglycolate + (2R)-3-phosphoglycerate + 2 H(+). RuBisCO catalyzes two reactions: the carboxylation of D-ribulose 1,5-bisphosphate, the primary event in carbon dioxide fixation, as well as the oxidative fragmentation of the pentose substrate in the photorespiration process. Both reactions occur simultaneously and in competition at the same active site. The polypeptide is Ribulose bisphosphate carboxylase large chain (Phelline comosa).